Here is a 158-residue protein sequence, read N- to C-terminus: Cyclic pyranopterin monophosphate synthase (158 aa).

Residues Leu-75 to His-77 and Met-111 to Glu-112 each bind substrate. Asp-126 is an active-site residue.

It belongs to the MoaC family. Homohexamer; trimer of dimers.

It carries out the reaction (8S)-3',8-cyclo-7,8-dihydroguanosine 5'-triphosphate = cyclic pyranopterin phosphate + diphosphate. It participates in cofactor biosynthesis; molybdopterin biosynthesis. Catalyzes the conversion of (8S)-3',8-cyclo-7,8-dihydroguanosine 5'-triphosphate to cyclic pyranopterin monophosphate (cPMP). This Caulobacter vibrioides (strain ATCC 19089 / CIP 103742 / CB 15) (Caulobacter crescentus) protein is Cyclic pyranopterin monophosphate synthase.